The following is a 217-amino-acid chain: Phosphate-specific transport system accessory protein PhoU homolog 2 (217 aa).

The protein belongs to the PhoU family. As to quaternary structure, homodimer.

The protein localises to the cytoplasm. Its function is as follows. Plays a role in the regulation of phosphate uptake. This Methanothermobacter thermautotrophicus (strain ATCC 29096 / DSM 1053 / JCM 10044 / NBRC 100330 / Delta H) (Methanobacterium thermoautotrophicum) protein is Phosphate-specific transport system accessory protein PhoU homolog 2.